We begin with the raw amino-acid sequence, 174 residues long: Trypsin inhibitor (174 aa).

Intrachain disulfides connect cysteine 40/cysteine 86 and cysteine 131/cysteine 140.

This sequence belongs to the protease inhibitor I3 (leguminous Kunitz-type inhibitor) family. Heterodimer of an alpha and a beta chain linked by a disulfide bond.

Functionally, inhibits trypsin and chymotrypsin with a 1:1 stoichiometry, with dissociation constants of 1.56 nM and 120 nM respectively. Inhibits plasma kallikrein, factor XIIa and plasmin with dissociation constants of 5.0 nM, 150 nM and 18 nM respectively. Does not inhibit factor Xa, thrombin, tissue kallikrein or cysteine proteinases such as papain and bromelain. The protein is Trypsin inhibitor of Enterolobium contortisiliquum (Pacara earpod tree).